The primary structure comprises 180 residues: Large ribosomal subunit protein uL5 (180 aa).

Belongs to the universal ribosomal protein uL5 family. As to quaternary structure, part of the 50S ribosomal subunit; part of the 5S rRNA/L5/L18/L25 subcomplex. Contacts the 5S rRNA and the P site tRNA. Forms a bridge to the 30S subunit in the 70S ribosome.

This is one of the proteins that bind and probably mediate the attachment of the 5S RNA into the large ribosomal subunit, where it forms part of the central protuberance. In the 70S ribosome it contacts protein S13 of the 30S subunit (bridge B1b), connecting the 2 subunits; this bridge is implicated in subunit movement. Contacts the P site tRNA; the 5S rRNA and some of its associated proteins might help stabilize positioning of ribosome-bound tRNAs. The polypeptide is Large ribosomal subunit protein uL5 (Anaeromyxobacter sp. (strain Fw109-5)).